Reading from the N-terminus, the 425-residue chain is Glutamate-1-semialdehyde 2,1-aminomutase (425 aa).

N6-(pyridoxal phosphate)lysine is present on Lys-265.

This sequence belongs to the class-III pyridoxal-phosphate-dependent aminotransferase family. HemL subfamily. As to quaternary structure, homodimer. Pyridoxal 5'-phosphate serves as cofactor.

Its subcellular location is the cytoplasm. The enzyme catalyses (S)-4-amino-5-oxopentanoate = 5-aminolevulinate. It participates in porphyrin-containing compound metabolism; protoporphyrin-IX biosynthesis; 5-aminolevulinate from L-glutamyl-tRNA(Glu): step 2/2. This is Glutamate-1-semialdehyde 2,1-aminomutase from Clostridium perfringens (strain SM101 / Type A).